The sequence spans 363 residues: Putative aryl-alcohol dehydrogenase AAD3 (363 aa).

It belongs to the aldo/keto reductase family. Aldo/keto reductase 2 subfamily.

The protein is Putative aryl-alcohol dehydrogenase AAD3 (AAD3) of Saccharomyces cerevisiae (strain ATCC 204508 / S288c) (Baker's yeast).